Consider the following 247-residue polypeptide: UPF0280 protein Mevan_0550 (247 aa).

This sequence belongs to the UPF0280 family.

The sequence is that of UPF0280 protein Mevan_0550 from Methanococcus vannielii (strain ATCC 35089 / DSM 1224 / JCM 13029 / OCM 148 / SB).